We begin with the raw amino-acid sequence, 304 residues long: Non-specific ribonucleoside hydrolase RihC (304 aa).

Histidine 233 is a catalytic residue.

It belongs to the IUNH family. RihC subfamily.

Functionally, hydrolyzes both purine and pyrimidine ribonucleosides with a broad-substrate specificity. This Shigella boydii serotype 4 (strain Sb227) protein is Non-specific ribonucleoside hydrolase RihC.